Reading from the N-terminus, the 258-residue chain is Alpha- and beta-fibrinogenase stejnefibrase-1 (258 aa).

A signal peptide spans 1-18 (MELIRVLANLLILQLSYA). A propeptide spanning residues 19–24 (QKSSEL) is cleaved from the precursor. A Peptidase S1 domain is found at 25-249 (IIGGDECNID…HLDWIQNIIA (225 aa)). 6 cysteine pairs are disulfide-bonded: Cys-31–Cys-163, Cys-50–Cys-66, Cys-98–Cys-256, Cys-142–Cys-210, Cys-174–Cys-189, and Cys-200–Cys-225. His-65 (charge relay system) is an active-site residue. N-linked (GlcNAc...) asparagine glycosylation is present at Asn-103. The Charge relay system role is filled by Asp-110. Residues Asn-121, Asn-122, Asn-154, and Asn-170 are each glycosylated (N-linked (GlcNAc...) asparagine). The Charge relay system role is filled by Ser-204.

The protein belongs to the peptidase S1 family. Snake venom subfamily. In terms of assembly, monomer. As to expression, expressed by the venom gland.

The protein resides in the secreted. Its activity is regulated as follows. Its activity is inhibited by PMSF and p-nitrophenyl-p-guanidinobenzoate (NPGB). Snake venom serine protease. Degrades concomitantly alpha- (FGA) and beta-chains of fibrinogen (FGB). This is Alpha- and beta-fibrinogenase stejnefibrase-1 from Trimeresurus stejnegeri (Chinese green tree viper).